The chain runs to 261 residues: Zinc import ATP-binding protein ZnuC (261 aa).

Residues 5–220 (ISLKALSVTF…PSYIALFGSA (216 aa)) enclose the ABC transporter domain. 37–44 (GPNGAGKS) provides a ligand contact to ATP. The segment at 236 to 261 (HHDLAGQPVSGDATQCNHHHHGHHHD) is disordered. Over residues 252–261 (NHHHHGHHHD) the composition is skewed to basic residues.

Belongs to the ABC transporter superfamily. Zinc importer (TC 3.A.1.15.5) family. As to quaternary structure, the complex is composed of two ATP-binding proteins (ZnuC), two transmembrane proteins (ZnuB) and a solute-binding protein (ZnuA).

Its subcellular location is the cell inner membrane. It catalyses the reaction Zn(2+)(out) + ATP(in) + H2O(in) = Zn(2+)(in) + ADP(in) + phosphate(in) + H(+)(in). Part of the ABC transporter complex ZnuABC involved in zinc import. Responsible for energy coupling to the transport system. This is Zinc import ATP-binding protein ZnuC from Vibrio vulnificus (strain CMCP6).